The following is a 498-amino-acid chain: Trichoplein keratin filament-binding protein (498 aa).

A coiled-coil region spans residues cysteine 11 to arginine 39. Residues lysine 50 and lysine 57 each participate in a glycyl lysine isopeptide (Lys-Gly) (interchain with G-Cter in ubiquitin) cross-link. 3 coiled-coil regions span residues alanine 66–glutamate 136, valine 163–glutamate 353, and leucine 380–threonine 479. Residues lysine 73–asparagine 498 form an interaction with keratin proteins region. The segment at glutamate 167–asparagine 189 is disordered. Over residues methionine 168 to asparagine 189 the composition is skewed to basic and acidic residues. Residues lysine 259–glutamate 425 are trichohyalin/plectin homology domain. Residues glutamine 447–asparagine 498 form a disordered region.

It belongs to the TCHP family. As to quaternary structure, interacts specifically with keratin proteins including, KRT5, KRT6A, KRT8, KRT14, KRT16 and KRT18. Interacts with KCTD17. In terms of processing, ubiquitinated. Ubiquitination by the BCR(KCTD17) E3 ubiquitin ligase complex results in proteasomal degradation, and induces ciliogenesis. Expressed at high levels in normal urothelial and breast epithelial cells. Also expressed in the smooth muscle and endothelial cells. Reduced expression seen in advanced bladder and breast carcinomas (at protein level). Ubiquitous. Expressed at highest levels in the heart, skeletal muscle, kidney, liver and testis.

It localises to the cytoplasm. Its subcellular location is the cytoskeleton. It is found in the cell membrane. The protein resides in the mitochondrion. The protein localises to the cell junction. It localises to the desmosome. Its subcellular location is the microtubule organizing center. It is found in the centrosome. Its function is as follows. Tumor suppressor which has the ability to inhibit cell growth and be pro-apoptotic during cell stress. Inhibits cell growth in bladder and prostate cancer cells by a down-regulation of HSPB1 by inhibiting its phosphorylation. May act as a 'capping' or 'branching' protein for keratin filaments in the cell periphery. May regulate K8/K18 filament and desmosome organization mainly at the apical or peripheral regions of simple epithelial cells. Is a negative regulator of ciliogenesis. The protein is Trichoplein keratin filament-binding protein of Homo sapiens (Human).